The primary structure comprises 228 residues: Adapter protein MecA (228 aa).

The segment at 79–98 (GQKNDDSAADQTDDEGTDTQ) is disordered. Acidic residues predominate over residues 85–95 (SAADQTDDEGT).

It belongs to the MecA family. Homodimer.

Its function is as follows. Enables the recognition and targeting of unfolded and aggregated proteins to the ClpC protease or to other proteins involved in proteolysis. In Lacticaseibacillus casei (strain BL23) (Lactobacillus casei), this protein is Adapter protein MecA.